Reading from the N-terminus, the 267-residue chain is Hydroxyethylthiazole kinase (267 aa).

Met-44 is a binding site for substrate. The ATP site is built by Arg-120 and Thr-165. Gly-192 is a binding site for substrate.

Belongs to the Thz kinase family. Requires Mg(2+) as cofactor.

The enzyme catalyses 5-(2-hydroxyethyl)-4-methylthiazole + ATP = 4-methyl-5-(2-phosphooxyethyl)-thiazole + ADP + H(+). The protein operates within cofactor biosynthesis; thiamine diphosphate biosynthesis; 4-methyl-5-(2-phosphoethyl)-thiazole from 5-(2-hydroxyethyl)-4-methylthiazole: step 1/1. In terms of biological role, catalyzes the phosphorylation of the hydroxyl group of 4-methyl-5-beta-hydroxyethylthiazole (THZ). In Carboxydothermus hydrogenoformans (strain ATCC BAA-161 / DSM 6008 / Z-2901), this protein is Hydroxyethylthiazole kinase.